The primary structure comprises 251 residues: Ubiquinone/menaquinone biosynthesis C-methyltransferase UbiE (251 aa).

S-adenosyl-L-methionine-binding positions include threonine 74, aspartate 95, and 123 to 124 (NA).

This sequence belongs to the class I-like SAM-binding methyltransferase superfamily. MenG/UbiE family.

The catalysed reaction is a 2-demethylmenaquinol + S-adenosyl-L-methionine = a menaquinol + S-adenosyl-L-homocysteine + H(+). It carries out the reaction a 2-methoxy-6-(all-trans-polyprenyl)benzene-1,4-diol + S-adenosyl-L-methionine = a 5-methoxy-2-methyl-3-(all-trans-polyprenyl)benzene-1,4-diol + S-adenosyl-L-homocysteine + H(+). The protein operates within quinol/quinone metabolism; menaquinone biosynthesis; menaquinol from 1,4-dihydroxy-2-naphthoate: step 2/2. Its pathway is cofactor biosynthesis; ubiquinone biosynthesis. Its function is as follows. Methyltransferase required for the conversion of demethylmenaquinol (DMKH2) to menaquinol (MKH2) and the conversion of 2-polyprenyl-6-methoxy-1,4-benzoquinol (DDMQH2) to 2-polyprenyl-3-methyl-6-methoxy-1,4-benzoquinol (DMQH2). In Edwardsiella ictaluri (strain 93-146), this protein is Ubiquinone/menaquinone biosynthesis C-methyltransferase UbiE.